A 223-amino-acid polypeptide reads, in one-letter code: Urease accessory protein UreF (223 aa).

Belongs to the UreF family. As to quaternary structure, ureD, UreF and UreG form a complex that acts as a GTP-hydrolysis-dependent molecular chaperone, activating the urease apoprotein by helping to assemble the nickel containing metallocenter of UreC. The UreE protein probably delivers the nickel.

It is found in the cytoplasm. In terms of biological role, required for maturation of urease via the functional incorporation of the urease nickel metallocenter. The protein is Urease accessory protein UreF of Rhizobium etli (strain CIAT 652).